We begin with the raw amino-acid sequence, 474 residues long: Probable multidrug resistance protein NorM (474 aa).

12 consecutive transmembrane segments (helical) span residues 33–50, 65–87, 108–130, 150–172, 179–201, 211–233, 258–280, 295–317, 334–356, 376–398, 410–432, and 436–458; these read LWLA…IAMM, VAAA…GLVS, SLRV…QLYG, YLDG…GLMG, PALW…LIHG, FGAG…VVCV, LLQL…GAAA, QIAL…AATV, AGFA…VALT, TLTA…QVVA, VPLL…VLGF, and LGPF…LLVW.

Belongs to the multi antimicrobial extrusion (MATE) (TC 2.A.66.1) family.

The protein resides in the cell inner membrane. Multidrug efflux pump. The polypeptide is Probable multidrug resistance protein NorM (norM) (Rhodopseudomonas palustris (strain ATCC BAA-98 / CGA009)).